A 529-amino-acid polypeptide reads, in one-letter code: Basal body-orientation factor 1 (529 aa).

Over residues 1–13 the composition is skewed to basic residues; that stretch reads MPSKGKDKKKGKS. The interval 1-22 is disordered; it reads MPSKGKDKKKGKSKGKDTKKLI. Coiled coils occupy residues 85–201 and 271–361; these read LKKQ…EAEK and VKEK…EVER.

It belongs to the BBOF1 family. In terms of assembly, interacts with MNS1 and ODF2.

It localises to the cytoplasm. Its subcellular location is the cytoskeleton. The protein localises to the cilium basal body. It is found in the flagellum axoneme. Plays an essential role in sperm motility and male fertility by stabilizing the sperm flagellar axonemal structure. May be required for the stability of ODF2 and MANS1 proteins. Dispensable for the assembly and function of motile cilia. In Homo sapiens (Human), this protein is Basal body-orientation factor 1.